The following is a 158-amino-acid chain: Trafficking protein particle complex subunit 6B (158 aa).

This sequence belongs to the TRAPP small subunits family. BET3 subfamily. Homodimer. Part of a TRAPP complex. Heterodimer with TRAPPC3. The heterodimer TRAPPC6B-TRAPPC3 interacts with TRAPPC1 likely providing a core for TRAPP complex formation.

The protein localises to the golgi apparatus. The protein resides in the cis-Golgi network. It is found in the endoplasmic reticulum. In terms of biological role, component of a transport protein particle (TRAPP) complex that may function in specific stages of inter-organelle traffic. Specifically involved in the early development of neural circuitry, likely by controlling the frequency and amplitude of intracellular calcium transients implicated in the regulation of neuron differentiation and survival. The sequence is that of Trafficking protein particle complex subunit 6B from Bos taurus (Bovine).